Here is a 190-residue protein sequence, read N- to C-terminus: Dynactin subunit 6 (190 aa).

The residue at position 186 (T186) is a Phosphothreonine; by CDK1.

Belongs to the dynactin subunits 5/6 family. Dynactin subunit 6 subfamily. Subunit of dynactin, a multiprotein complex part of a tripartite complex with dynein and a adapter, such as BICDL1, BICD2 or HOOK3. The dynactin complex is built around ACTR1A/ACTB filament and consists of an actin-related filament composed of a shoulder domain, a pointed end and a barbed end. Its length is defined by its flexible shoulder domain. The soulder is composed of 2 DCTN1 subunits, 4 DCTN2 and 2 DCTN3. The 4 DCNT2 (via N-terminus) bind the ACTR1A filament and act as molecular rulers to determine the length. The pointed end is important for binding dynein-dynactin cargo adapters. Consists of 4 subunits: ACTR10, DCNT4, DCTN5 and DCTN6. Within the complex DCTN6 forms a heterodimer with DCTN5. The barbed end is composed of a CAPZA1:CAPZB heterodimers, which binds ACTR1A/ACTB filament and dynactin and stabilizes dynactin. Interacts with PLK1. Interacts with N4BP2L1. Post-translationally, phosphorylation at Thr-186 by CDK1 during mitotic prometaphase creates a binding site for PLK1 that facilitates its recruitment to kinetochores.

The protein localises to the cytoplasm. The protein resides in the cytoskeleton. It is found in the chromosome. Its subcellular location is the centromere. It localises to the kinetochore. Functionally, part of the dynactin complex that activates the molecular motor dynein for ultra-processive transport along microtubules. The sequence is that of Dynactin subunit 6 (DCTN6) from Bos taurus (Bovine).